A 331-amino-acid polypeptide reads, in one-letter code: Gem-associated protein 2 (331 aa).

Disordered regions lie at residues M1–L23, S101–Q130, and N151–P222. The segment covering V11–E21 has biased composition (acidic residues). Residues N106–N126 show a composition bias toward low complexity. Residues D165 to V215 show a composition bias toward acidic residues. Positions D173–L224 form a coiled coil.

It belongs to the gemin-2 family.

It is found in the nucleus. It localises to the gem. The protein resides in the cytoplasm. In terms of biological role, the SMN complex catalyzes the assembly of small nuclear ribonucleoproteins (snRNPs), the building blocks of the spliceosome, and thereby plays an important role in the splicing of cellular pre-mRNAs. Most spliceosomal snRNPs contain a common set of Sm proteins SNRPB, SNRPD1, SNRPD2, SNRPD3, SNRPE, SNRPF and SNRPG that assemble in a heptameric protein ring on the Sm site of the small nuclear RNA to form the core snRNP (Sm core). In the cytosol, the Sm proteins SNRPD1, SNRPD2, SNRPE, SNRPF and SNRPG (5Sm) are trapped in an inactive 6S pICln-Sm complex by the chaperone CLNS1A that controls the assembly of the core snRNP. To assemble core snRNPs, the SMN complex accepts the trapped 5Sm proteins from CLNS1A. Binding of snRNA inside 5Sm ultimately triggers eviction of the SMN complex, thereby allowing binding of SNRPD3 and SNRPB to complete assembly of the core snRNP. Within the SMN complex, GEMIN2 constrains the conformation of 5Sm, thereby promoting 5Sm binding to snRNA containing the snRNP code (a nonameric Sm site and a 3'-adjacent stem-loop), thus preventing progression of assembly until a cognate substrate is bound. Functionally, may play an essential role in spliceosomal snRNP assembly in the cytoplasm and may be required for pre-mRNA splicing in the nucleus. The protein is Gem-associated protein 2 (gemin2) of Dictyostelium discoideum (Social amoeba).